Consider the following 503-residue polypeptide: ATP synthase subunit alpha (503 aa).

170 to 177 (GDRQTGKT) is a binding site for ATP.

This sequence belongs to the ATPase alpha/beta chains family. In terms of assembly, F-type ATPases have 2 components, CF(1) - the catalytic core - and CF(0) - the membrane proton channel. CF(1) has five subunits: alpha(3), beta(3), gamma(1), delta(1), epsilon(1). CF(0) has three main subunits: a(1), b(2) and c(9-12). The alpha and beta chains form an alternating ring which encloses part of the gamma chain. CF(1) is attached to CF(0) by a central stalk formed by the gamma and epsilon chains, while a peripheral stalk is formed by the delta and b chains.

It localises to the cell inner membrane. The enzyme catalyses ATP + H2O + 4 H(+)(in) = ADP + phosphate + 5 H(+)(out). Its function is as follows. Produces ATP from ADP in the presence of a proton gradient across the membrane. The alpha chain is a regulatory subunit. The protein is ATP synthase subunit alpha of Geobacter metallireducens (strain ATCC 53774 / DSM 7210 / GS-15).